A 298-amino-acid polypeptide reads, in one-letter code: Probable protein phosphatase 2C 26 (298 aa).

The region spanning 48 to 295 (SVGIHAIPHP…DDVTVIVAKV (248 aa)) is the PPM-type phosphatase domain. Mn(2+) contacts are provided by aspartate 82, glycine 83, aspartate 213, and aspartate 286.

Belongs to the PP2C family. Requires Mg(2+) as cofactor. It depends on Mn(2+) as a cofactor.

The catalysed reaction is O-phospho-L-seryl-[protein] + H2O = L-seryl-[protein] + phosphate. It catalyses the reaction O-phospho-L-threonyl-[protein] + H2O = L-threonyl-[protein] + phosphate. The sequence is that of Probable protein phosphatase 2C 26 from Arabidopsis thaliana (Mouse-ear cress).